The chain runs to 222 residues: Cytochrome b6 (222 aa).

The chain crosses the membrane as a helical span at residues 39–59; it reads IFYCLGGITLTCFLIQFATGF. Position 42 (C42) interacts with heme c. Heme b-binding residues include H93 and H107. The next 3 membrane-spanning stretches (helical) occupy residues 97–117, 123–143, and 193–213; these read ASMM…TGGF, LTWV…VTGY, and LHTF…FLMI. Positions 194 and 209 each coordinate heme b.

The protein belongs to the cytochrome b family. PetB subfamily. As to quaternary structure, the 4 large subunits of the cytochrome b6-f complex are cytochrome b6, subunit IV (17 kDa polypeptide, PetD), cytochrome f and the Rieske protein, while the 4 small subunits are PetG, PetL, PetM and PetN. The complex functions as a dimer. The cofactor is heme b. Heme c serves as cofactor.

The protein localises to the cellular thylakoid membrane. In terms of biological role, component of the cytochrome b6-f complex, which mediates electron transfer between photosystem II (PSII) and photosystem I (PSI), cyclic electron flow around PSI, and state transitions. This chain is Cytochrome b6, found in Cyanothece sp. (strain PCC 7425 / ATCC 29141).